The sequence spans 129 residues: DNA base-flipping protein (129 aa).

Belongs to the MGMT family. ATL subfamily. Interacts with HelD and UvrA.

Involved in DNA damage recognition. Binds DNA containing O(6)-methylguanine and larger O(6)-alkylguanine adducts, and to double-stranded DNA that contains an AP (apurinic/apyrimidinic) site. Binds to the damaged base and flips the base out of the DNA duplex into an extrahelical conformation, which allows processing by repair proteins. Works in partnership with the nucleotide excision repair (NER) pathway to enhance the repair of the O(6)-alkylguanine adducts larger than the methyl adduct. Also prevents methyl-directed mismatch repair (MMR)-mediated attack of the O(6)-alkylguanine:T mispairs for the larger alkyl groups. The sequence is that of DNA base-flipping protein from Escherichia coli (strain K12).